A 217-amino-acid chain; its full sequence is Homeobox protein Hox-B7 (217 aa).

An Antp-type hexapeptide motif is present at residues 126–131 (IYPWMR). The segment at residues 137-196 (RKRGRQTYTRYQTLELEKEFHYNRYLTRRRRIEIAHTLCLTERQIKIWFQNRRMKWKKEN) is a DNA-binding region (homeobox). A disordered region spans residues 194-217 (KENKTAGPGTTGQDRAEAEEEEEE).

It belongs to the Antp homeobox family. Forms a DNA-binding heterodimer with transcription factor PBX1.

Its subcellular location is the nucleus. In terms of biological role, sequence-specific transcription factor which is part of a developmental regulatory system that provides cells with specific positional identities on the anterior-posterior axis. The chain is Homeobox protein Hox-B7 (HOXB7) from Homo sapiens (Human).